Reading from the N-terminus, the 312-residue chain is Very-long-chain 3-oxoacyl-CoA reductase (312 aa).

The chain crosses the membrane as a helical span at residues 4 to 24; sequence APPAAGFLYWVGASTIAYLAL. 50 to 79 is an NADP(+) binding site; the sequence is GEWAVVTGGTDGIGKAYAEELAKRGMKIVL. 2 helical membrane passes run 182–202 and 269–285; these read GVIL…LTIY and TTGY…NSIM. Residue serine 189 coordinates substrate. Tyrosine 202 (proton acceptor) is an active-site residue. The short motif at 308–312 is the Di-lysine motif element; sequence KRKKN.

The protein belongs to the short-chain dehydrogenases/reductases (SDR) family. 17-beta-HSD 3 subfamily. As to expression, expressed in most tissues tested.

The protein localises to the endoplasmic reticulum membrane. The catalysed reaction is a very-long-chain (3R)-3-hydroxyacyl-CoA + NADP(+) = a very-long-chain 3-oxoacyl-CoA + NADPH + H(+). The enzyme catalyses 17beta-estradiol + NAD(+) = estrone + NADH + H(+). It carries out the reaction 17beta-estradiol + NADP(+) = estrone + NADPH + H(+). It catalyses the reaction 3-oxooctadecanoyl-CoA + NADPH + H(+) = (3R)-hydroxyoctadecanoyl-CoA + NADP(+). The catalysed reaction is (7Z,10Z,13Z,16Z)-3-oxodocosatetraenoyl-CoA + NADPH + H(+) = (3R)-hydroxy-(7Z,10Z,13Z,16Z)-docosatetraenoyl-CoA + NADP(+). The enzyme catalyses 3-oxo-(7Z,10Z,13Z,16Z,19Z)-docosapentaenoyl-CoA + NADPH + H(+) = (3R)-hydroxy-(7Z,10Z,13Z,16Z,19Z)-docosapentaenoyl-CoA + NADP(+). It carries out the reaction (8Z,11Z,14Z)-3-oxoeicosatrienoyl-CoA + NADPH + H(+) = (3R)-hydroxy-(8Z,11Z,14Z)-eicosatrienoyl-CoA + NADP(+). Its pathway is lipid metabolism; fatty acid biosynthesis. It functions in the pathway steroid biosynthesis; estrogen biosynthesis. In terms of biological role, catalyzes the second of the four reactions of the long-chain fatty acids elongation cycle. This endoplasmic reticulum-bound enzymatic process, allows the addition of two carbons to the chain of long- and very long-chain fatty acids/VLCFAs per cycle. This enzyme has a 3-ketoacyl-CoA reductase activity, reducing 3-ketoacyl-CoA to 3-hydroxyacyl-CoA, within each cycle of fatty acid elongation. Thereby, it may participate in the production of VLCFAs of different chain lengths that are involved in multiple biological processes as precursors of membrane lipids and lipid mediators. May also catalyze the transformation of estrone (E1) into estradiol (E2) and play a role in estrogen formation. The protein is Very-long-chain 3-oxoacyl-CoA reductase of Mus musculus (Mouse).